The following is an 85-amino-acid chain: Coiled-coil-helix-coiled-coil-helix domain-containing protein 7 (85 aa).

The CHCH domain occupies 13-55; the sequence is INPCLSESDASTRCLDENNYDRERCSTYFLRYKNCRRFWNSIV. 2 consecutive short sequence motifs (cx9C motif) follow at residues 16–26 and 37–47; these read CLSESDASTRC and CSTYFLRYKNC. Cystine bridges form between cysteine 16/cysteine 47 and cysteine 26/cysteine 37.

Belongs to the CHCHD7 family. As to quaternary structure, monomer.

The protein resides in the mitochondrion intermembrane space. The polypeptide is Coiled-coil-helix-coiled-coil-helix domain-containing protein 7 (CHCHD7) (Homo sapiens (Human)).